The following is a 554-amino-acid chain: MTKFVFVTGGVVSSLGKGIAAASLAAILESRGLKVTLLKLDPYINVDPGTMSPFQHGEVFVTEDGAETDLDLGHYERFVSAKMRKANNFTTGQIYESVIRKERRGEYLGKTVQVIPHITNEIQAFIERGAKASHDGKADVAIVEIGGTVGDIESLPFLEAARQMSLRLGRNQAAFVHLTLVPFIASAGELKTKPTQHSVQKLREIGVQPTALLCRADRPIPDDERAKISLFANMPQDAVISVWDVDTIYKIPQMLNEQGLDRIICEELRIDAPPADLSMWSRMVHTLENPQHEITIGMVGKYVDLTESYKSLIEALRHAGLHTSTRVNIEYIDSEELESGHTQVLESLDAILVPGGFGKRGTEGKIRAIQYAREKTVPYLGICLGMQLAVIEFARHVAGMQDANSTEFNLETEHPVVALITEWQDRDGRVEKRSADSDLGGTMRLGAQRVPVQTGTKASQIYGAEVNERHRHRYEVNNHYVPQLEKSGMIISARTPSENLPEMMELPGAMHPWFVGVQFHPEFTSTPRDGHPLFKAYVEAALAHRQRQAQRAVA.

An amidoligase domain region spans residues 1–270 (MTKFVFVTGG…DRIICEELRI (270 aa)). A CTP-binding site is contributed by serine 13. Serine 13 serves as a coordination point for UTP. Residues 14–19 (SLGKGI) and aspartate 71 each bind ATP. Residues aspartate 71 and glutamate 144 each coordinate Mg(2+). CTP is bound by residues 151 to 153 (DIE), 191 to 196 (KTKPTQ), and lysine 227. Residues 191 to 196 (KTKPTQ) and lysine 227 each bind UTP. The 253-residue stretch at 295-547 (TIGMVGKYVD…VEAALAHRQR (253 aa)) folds into the Glutamine amidotransferase type-1 domain. L-glutamine is bound at residue glycine 356. The active-site Nucleophile; for glutamine hydrolysis is cysteine 383. L-glutamine contacts are provided by residues 384–387 (LGMQ), glutamate 407, and arginine 473. Residues histidine 520 and glutamate 522 contribute to the active site.

It belongs to the CTP synthase family. Homotetramer.

The enzyme catalyses UTP + L-glutamine + ATP + H2O = CTP + L-glutamate + ADP + phosphate + 2 H(+). It catalyses the reaction L-glutamine + H2O = L-glutamate + NH4(+). It carries out the reaction UTP + NH4(+) + ATP = CTP + ADP + phosphate + 2 H(+). Its pathway is pyrimidine metabolism; CTP biosynthesis via de novo pathway; CTP from UDP: step 2/2. Its activity is regulated as follows. Allosterically activated by GTP, when glutamine is the substrate; GTP has no effect on the reaction when ammonia is the substrate. The allosteric effector GTP functions by stabilizing the protein conformation that binds the tetrahedral intermediate(s) formed during glutamine hydrolysis. Inhibited by the product CTP, via allosteric rather than competitive inhibition. Catalyzes the ATP-dependent amination of UTP to CTP with either L-glutamine or ammonia as the source of nitrogen. Regulates intracellular CTP levels through interactions with the four ribonucleotide triphosphates. In Ralstonia nicotianae (strain ATCC BAA-1114 / GMI1000) (Ralstonia solanacearum), this protein is CTP synthase.